Here is a 231-residue protein sequence, read N- to C-terminus: NADH-ubiquinone oxidoreductase chain 4 (231 aa).

7 helical membrane-spanning segments follow: residues 1-21 (PIAGSMILAAILLKLGGYGII), 34-54 (VFLPFIVLALWGAILANLTCL), 63-85 (IAYSSISHMGLVVAAIIIQTPWG), 89-111 (AMALMIAHGFTSSALFCLANTTY), 128-148 (MMPMATTWWLMANLMNIAIPP), 169-189 (TIIMLGLSMLITASYSLHMFL), and 211-231 (LLMTLHLIPLLMISFKPELVT).

Belongs to the complex I subunit 4 family.

It is found in the mitochondrion membrane. It catalyses the reaction a ubiquinone + NADH + 5 H(+)(in) = a ubiquinol + NAD(+) + 4 H(+)(out). Core subunit of the mitochondrial membrane respiratory chain NADH dehydrogenase (Complex I) that is believed to belong to the minimal assembly required for catalysis. Complex I functions in the transfer of electrons from NADH to the respiratory chain. The immediate electron acceptor for the enzyme is believed to be ubiquinone. In Sistrurus miliarius (Pigmy rattlesnake), this protein is NADH-ubiquinone oxidoreductase chain 4 (MT-ND4).